Consider the following 603-residue polypeptide: NADH-ubiquinone oxidoreductase chain 5 (603 aa).

Transmembrane regions (helical) follow at residues 4 to 24 (YTTMTTLTLTPLILPILTTLI), 38 to 58 (SIIASTFIISLFPTTMFMCLD), 87 to 107 (MTFIPVALFVTWAIMEFSLWY), 122 to 142 (LIFLITMLILVTANNLFQLFI), 144 to 160 (WEGVGIMSFLLISWWYA), 171 to 191 (AILYNRIGDIGFILALAWFLL), 211 to 233 (TPLLGFLLAAAGKSAQLGLHPWL), 241 to 261 (TPVSALLHSSTMVVAGVFLLI), 272 to 292 (LIQTLTLCLGAITTLFAAICA), 301 to 320 (IVAFSTSSQLGLMMVTIGIN), 325 to 347 (AFLHICTHAFFKAMLFMCSGSII), 370 to 390 (STSLIIGSLALAGMPFLTGFY), 407 to 429 (WALSITLIATSLTSAYSTRMILL), 457 to 477 (LTIGSLFAGFFITNNILPMST), 482 to 502 (IPLYLKLTALSVTFLGLLTAL), and 583 to 603 (MIKLYFLSFLFPLILTLLLIM).

The protein belongs to the complex I subunit 5 family. As to quaternary structure, core subunit of respiratory chain NADH dehydrogenase (Complex I) which is composed of 45 different subunits.

It is found in the mitochondrion inner membrane. The enzyme catalyses a ubiquinone + NADH + 5 H(+)(in) = a ubiquinol + NAD(+) + 4 H(+)(out). In terms of biological role, core subunit of the mitochondrial membrane respiratory chain NADH dehydrogenase (Complex I) which catalyzes electron transfer from NADH through the respiratory chain, using ubiquinone as an electron acceptor. Essential for the catalytic activity and assembly of complex I. This is NADH-ubiquinone oxidoreductase chain 5 (MT-ND5) from Pan paniscus (Pygmy chimpanzee).